A 238-amino-acid polypeptide reads, in one-letter code: IkB-like protein (238 aa).

4 ANK repeats span residues 48–77, 86–115, 123–152, and 157–187; these read GSSV…PGEI, DGNS…KNGT, NGMT…DPTQ, and RGFT…PLYM. The Nuclear localization signal signature appears at 80–86; it reads PHRRDKD. A Nuclear localization signal motif is present at residues 202–213; that stretch reads KKKPKIIITGCK. Positions 205 to 212 match the PxIxITxC motif; Interaction with host PPP3CA motif; the sequence is PKIIITGC. The short motif at 227–230 is the FLCV motif element; it reads FLCV.

This sequence belongs to the asfivirus A238L family. Interacts with host PPIA. Interacts with host PPP3CA/Calcineurin. Interacts with host RELA/p65; interaction of the 32 kDa form with host RELA results in the formation of a stable complex with NF-kappa-B. Interacts with host PPP3R1. Interacts with host EP300; this interaction inhibits the association of host EP300 with host RELA, JUN and NFATC2. Post-translationally, the protein exists in a 28 kDa and a 32 kDa form, probably due to post-translational modifications which are neither phosphorylation, nor sumoylation.

It is found in the host nucleus. Its subcellular location is the host cytoplasm. Its function is as follows. I-kappa-B- (IkB)-like protein that inhibits the binding of NF-kappa-B to DNA, thereby down-regulating pro-inflammatory cytokine production. Forms a heterodimer with the NF-kappa-B subunit RELA/p65 and prevents the activation of the NF-kappa-B transcription factor. Also inhibits the host calcineurin phosphatase activity, which is required for the induction of nuclear factor of activated T cells(NFAT)-dependent immune response genes. Inhibits calcineurin function, which is required for the induction of nuclear factor of activated T cells (NFAT)-dependent immune response genes. Prevents the binding of substrates to calcineurin without affecting the phosphatase activity. Does not contain the serine residues that are phosphorylated by host IkB kinase and thus is not degraded following stimulation of the NFkB pathway. This is IkB-like protein (A238L) from African swine fever virus (strain Badajoz 1971 Vero-adapted) (Ba71V).